The chain runs to 375 residues: Succinyl-diaminopimelate desuccinylase (375 aa).

His-66 is a Zn(2+) binding site. The active site involves Asp-68. Position 99 (Asp-99) interacts with Zn(2+). Glu-133 acts as the Proton acceptor in catalysis. Residues Glu-134, Glu-162, and His-348 each coordinate Zn(2+).

It belongs to the peptidase M20A family. DapE subfamily. Homodimer. The cofactor is Zn(2+). It depends on Co(2+) as a cofactor.

The enzyme catalyses N-succinyl-(2S,6S)-2,6-diaminopimelate + H2O = (2S,6S)-2,6-diaminopimelate + succinate. It participates in amino-acid biosynthesis; L-lysine biosynthesis via DAP pathway; LL-2,6-diaminopimelate from (S)-tetrahydrodipicolinate (succinylase route): step 3/3. In terms of biological role, catalyzes the hydrolysis of N-succinyl-L,L-diaminopimelic acid (SDAP), forming succinate and LL-2,6-diaminopimelate (DAP), an intermediate involved in the bacterial biosynthesis of lysine and meso-diaminopimelic acid, an essential component of bacterial cell walls. The protein is Succinyl-diaminopimelate desuccinylase of Stenotrophomonas maltophilia (strain K279a).